The sequence spans 455 residues: CDP-diacylglycerol--serine O-phosphatidyltransferase (455 aa).

PLD phosphodiesterase domains follow at residues 134–160 (VFGV…NNVY) and 356–383 (GDNT…NPRA).

This sequence belongs to the CDP-alcohol phosphatidyltransferase class-II family. Multimeric.

The protein resides in the cytoplasm. It localises to the cell inner membrane. The enzyme catalyses a CDP-1,2-diacyl-sn-glycerol + L-serine = a 1,2-diacyl-sn-glycero-3-phospho-L-serine + CMP + H(+). The polypeptide is CDP-diacylglycerol--serine O-phosphatidyltransferase (pssA) (Haemophilus influenzae (strain ATCC 51907 / DSM 11121 / KW20 / Rd)).